A 156-amino-acid polypeptide reads, in one-letter code: MGRFIFVSFGLLVVFLSLSGTGADCPSDWSSFKQYCYQIVKELKTWEDAEKFCSEQANDGHLVSIESYREAVFVAELLSENVKTTKYNVWIGLSVQNKGQQCSSEWSDGSSVSYENLVKPNPKKCFVLKKESEFRTWSNVYCEQKHIFMCKFLGSR.

The N-terminal stretch at 1-23 (MGRFIFVSFGLLVVFLSLSGTGA) is a signal peptide. The C-type lectin domain maps to 24 to 151 (DCPSDWSSFK…CEQKHIFMCK (128 aa)). 3 disulfides stabilise this stretch: Cys-25–Cys-36, Cys-53–Cys-150, and Cys-125–Cys-142.

It belongs to the snaclec family. Heterodimer of subunits alpha and beta; disulfide-linked. Expressed by the venom gland.

It is found in the secreted. Its function is as follows. Weakly agglutinates platelets at high doses by binding to GPIbalpha (GP1BA). This chain is Snaclec alboaggregin-B subunit alpha, found in Trimeresurus albolabris (White-lipped pit viper).